A 262-amino-acid polypeptide reads, in one-letter code: Dihydroorotate dehydrogenase B (NAD(+)), electron transfer subunit (262 aa).

The FAD-binding FR-type domain maps to 2-102 (SKVFDAKVLA…MGPLGRGFTL (101 aa)). FAD is bound by residues 53–56 (RPIS), 70–72 (LFR), and 77–78 (GT). [2Fe-2S] cluster contacts are provided by cysteine 224, cysteine 229, cysteine 232, and cysteine 248.

The protein belongs to the PyrK family. In terms of assembly, heterotetramer of 2 PyrK and 2 PyrD type B subunits. However, the metal reductase complex seems to be composed of a heterooctamer of 4 PyrK and 4 PyrD subunits. FAD is required as a cofactor. [2Fe-2S] cluster serves as cofactor.

It is found in the cytoplasm. It functions in the pathway pyrimidine metabolism; UMP biosynthesis via de novo pathway; orotate from (S)-dihydroorotate (NAD(+) route): step 1/1. Responsible for channeling the electrons from the oxidation of dihydroorotate from the FMN redox center in the PyrD type B subunit to the ultimate electron acceptor NAD(+). Its function is as follows. Together with PyrD, also forms a metal reductase complex able to reduce Fe(III)-chelates to Fe(II)-chelates, as well as soluble Cr(VI) and U(VI), using NADH as electron donor. To a lesser extent, can also use NADPH as an electron donor. Is unable to reduce riboflavin and FMN with NADH as electron donor. May have an in vivo role in metal reduction in D.reducens, which is an organism capable of reducing contaminant heavy metals and radionuclides. This Desulforamulus reducens (strain ATCC BAA-1160 / DSM 100696 / MI-1) (Desulfotomaculum reducens) protein is Dihydroorotate dehydrogenase B (NAD(+)), electron transfer subunit.